Here is a 308-residue protein sequence, read N- to C-terminus: Putative protein TIC 214 N-terminal part (308 aa).

Helical transmembrane passes span 18 to 38 (IINS…FSIG), 64 to 84 (FITG…HLAL), 87 to 107 (PHTI…WNNH), 124 to 144 (LSIQ…HFIL), 172 to 192 (VGWL…LSWI), and 215 to 235 (IFSI…PSPI). Residues 239 to 249 (KLKETSEMEER) show a composition bias toward basic and acidic residues. Residues 239–308 (KLKETSEMEE…RDPSEWKGNI (70 aa)) are disordered. Positions 250–262 (GESEEETDVEIET) are enriched in acidic residues. The segment covering 264 to 273 (SETKETKQEQ) has biased composition (basic and acidic residues). Residues 275–293 (GSTEEDPSLCSEEQEDPDK) are compositionally biased toward acidic residues. Residues 294 to 308 (LDETGRDPSEWKGNI) are compositionally biased toward basic and acidic residues.

Belongs to the TIC214 family. Part of the Tic complex.

The protein localises to the plastid. Its subcellular location is the chloroplast inner membrane. Involved in protein precursor import into chloroplasts. May be part of an intermediate translocation complex acting as a protein-conducting channel at the inner envelope. The sequence is that of Putative protein TIC 214 N-terminal part from Piper cenocladum (Ant piper).